The sequence spans 296 residues: Ribosomal RNA small subunit methyltransferase H (296 aa).

Residues 41-43 (GGY), Asp-59, Phe-86, Asp-104, and Gln-111 each bind S-adenosyl-L-methionine.

This sequence belongs to the methyltransferase superfamily. RsmH family.

It localises to the cytoplasm. The enzyme catalyses cytidine(1402) in 16S rRNA + S-adenosyl-L-methionine = N(4)-methylcytidine(1402) in 16S rRNA + S-adenosyl-L-homocysteine + H(+). Its function is as follows. Specifically methylates the N4 position of cytidine in position 1402 (C1402) of 16S rRNA. The sequence is that of Ribosomal RNA small subunit methyltransferase H from Neorickettsia sennetsu (strain ATCC VR-367 / Miyayama) (Ehrlichia sennetsu).